We begin with the raw amino-acid sequence, 112 residues long: Cell cycle protein GpsB (112 aa).

Positions 32–75 (LDDIIKDYETYISTIEELRQENTRLKEEVKQAKKRQEAAQTTVS) form a coiled coil.

This sequence belongs to the GpsB family. As to quaternary structure, forms polymers through the coiled coil domains. Interacts with PBP1, MreC and EzrA.

It localises to the cytoplasm. In terms of biological role, divisome component that associates with the complex late in its assembly, after the Z-ring is formed, and is dependent on DivIC and PBP2B for its recruitment to the divisome. Together with EzrA, is a key component of the system that regulates PBP1 localization during cell cycle progression. Its main role could be the removal of PBP1 from the cell pole after pole maturation is completed. Also contributes to the recruitment of PBP1 to the division complex. Not essential for septum formation. The polypeptide is Cell cycle protein GpsB (Streptococcus mutans serotype c (strain ATCC 700610 / UA159)).